Here is a 245-residue protein sequence, read N- to C-terminus: Probable transcriptional regulatory protein APH_0480 (245 aa).

It belongs to the TACO1 family.

The protein resides in the cytoplasm. The chain is Probable transcriptional regulatory protein APH_0480 from Anaplasma phagocytophilum (strain HZ).